The sequence spans 436 residues: Adenylosuccinate synthetase (436 aa).

GTP contacts are provided by residues 12–18 (GDEGKGK) and 40–42 (GHT). Asp-13 acts as the Proton acceptor in catalysis. Residues Asp-13 and Gly-40 each coordinate Mg(2+). Residues 13-16 (DEGK), 38-41 (NAGH), Thr-128, Arg-142, Gln-223, Thr-238, and Arg-302 each bind IMP. Catalysis depends on His-41, which acts as the Proton donor. Position 298–304 (298–304 (TTTGRRR)) interacts with substrate. GTP-binding positions include Arg-304, 330–332 (KLD), and 412–414 (SLG).

Belongs to the adenylosuccinate synthetase family. In terms of assembly, homodimer. It depends on Mg(2+) as a cofactor.

It is found in the cytoplasm. It catalyses the reaction IMP + L-aspartate + GTP = N(6)-(1,2-dicarboxyethyl)-AMP + GDP + phosphate + 2 H(+). The protein operates within purine metabolism; AMP biosynthesis via de novo pathway; AMP from IMP: step 1/2. Its function is as follows. Plays an important role in the de novo pathway of purine nucleotide biosynthesis. Catalyzes the first committed step in the biosynthesis of AMP from IMP. In Prochlorococcus marinus subsp. pastoris (strain CCMP1986 / NIES-2087 / MED4), this protein is Adenylosuccinate synthetase.